Here is a 729-residue protein sequence, read N- to C-terminus: Transcriptional activator ptaB (729 aa).

The span at 1 to 12 (MPQHPGLPPGHP) shows a compositional bias: pro residues. 4 disordered regions span residues 1–69 (MPQH…QAHA), 207–341 (AAAA…QNQA), 505–538 (LELS…SLPE), and 614–729 (RGPQ…KGTA). Low complexity predominate over residues 38–56 (PGGPQVTQGGPMMGMPPGA). Over residues 272 to 285 (APQPHPTPNPPPQQ) the composition is skewed to pro residues. 2 stretches are compositionally biased toward low complexity: residues 286–300 (LPQA…HQQP) and 307–341 (QPQQ…QNQA). Residues 614 to 625 (RGPQMNGPNQFA) are compositionally biased toward polar residues. Positions 655-671 (GPPGMVQQGQMQPNVGQ) are enriched in low complexity. The segment covering 672-682 (ATSASASPQVT) has biased composition (polar residues).

The protein belongs to the MFG1 family. As to quaternary structure, interacts with somA.

The protein localises to the nucleus. In terms of biological role, transcriptional regulator that forms a complex with somA to control biofilm formation. This is Transcriptional activator ptaB from Aspergillus fumigatus (strain ATCC MYA-4609 / CBS 101355 / FGSC A1100 / Af293) (Neosartorya fumigata).